Consider the following 251-residue polypeptide: Phosphate import ATP-binding protein PstB (251 aa).

The 242-residue stretch at 5–246 (FDIRNFSVYY…PEKELTEKYL (242 aa)) folds into the ABC transporter domain. 37–44 (GPSGCGKS) provides a ligand contact to ATP.

The protein belongs to the ABC transporter superfamily. Phosphate importer (TC 3.A.1.7) family. In terms of assembly, the complex is composed of two ATP-binding proteins (PstB), two transmembrane proteins (PstC and PstA) and a solute-binding protein (PstS).

The protein resides in the cell membrane. It catalyses the reaction phosphate(out) + ATP + H2O = ADP + 2 phosphate(in) + H(+). Its function is as follows. Part of the ABC transporter complex PstSACB involved in phosphate import. Responsible for energy coupling to the transport system. This chain is Phosphate import ATP-binding protein PstB, found in Archaeoglobus fulgidus (strain ATCC 49558 / DSM 4304 / JCM 9628 / NBRC 100126 / VC-16).